The following is a 91-amino-acid chain: DNA-directed RNA polymerase subunit omega (91 aa).

It belongs to the RNA polymerase subunit omega family. As to quaternary structure, the RNAP catalytic core consists of 2 alpha, 1 beta, 1 beta' and 1 omega subunit. When a sigma factor is associated with the core the holoenzyme is formed, which can initiate transcription.

It carries out the reaction RNA(n) + a ribonucleoside 5'-triphosphate = RNA(n+1) + diphosphate. Promotes RNA polymerase assembly. Latches the N- and C-terminal regions of the beta' subunit thereby facilitating its interaction with the beta and alpha subunits. The protein is DNA-directed RNA polymerase subunit omega of Actinobacillus pleuropneumoniae serotype 5b (strain L20).